The following is a 162-amino-acid chain: Regulatory protein RecX (162 aa).

Belongs to the RecX family.

The protein localises to the cytoplasm. In terms of biological role, modulates RecA activity. The sequence is that of Regulatory protein RecX from Pectobacterium atrosepticum (strain SCRI 1043 / ATCC BAA-672) (Erwinia carotovora subsp. atroseptica).